The primary structure comprises 284 residues: Isopentenyl-diphosphate delta-isomerase (284 aa).

Residue Lys77 coordinates substrate. The Mg(2+) site is built by His81 and His92. The Nudix hydrolase domain maps to Leu90–Leu256. Residues Arg111 and Lys115 each coordinate substrate. The active site involves Cys127. Residue Ser128 participates in substrate binding. A Nudix box motif is present at residues Ser128–Gly172. Mg(2+)-binding residues include Glu204 and Glu206. Glu206 is an active-site residue.

This sequence belongs to the IPP isomerase type 1 family. Mg(2+) serves as cofactor.

It is found in the cytoplasm. It carries out the reaction isopentenyl diphosphate = dimethylallyl diphosphate. It functions in the pathway isoprenoid biosynthesis; dimethylallyl diphosphate biosynthesis; dimethylallyl diphosphate from isopentenyl diphosphate: step 1/1. In terms of biological role, isopentenyl-diphosphate delta-isomerase; part of the second module of ergosterol biosynthesis pathway that includes the middle steps of the pathway. IDI1 catalyzes the 1,3-allylic rearrangement of isopentenyl (IPP) to its highly electrophilic allylic isomer, dimethylallyl diphosphate (DMAPP). The second module is carried out in the vacuole and involves the formation of farnesyl diphosphate, which is also an important intermediate in the biosynthesis of ubiquinone, dolichol, heme and prenylated proteins. Activity by the mevalonate kinase ERG12 first converts mevalonate into 5-phosphomevalonate. 5-phosphomevalonate is then further converted to 5-diphosphomevalonate by the phosphomevalonate kinase ERG8. The diphosphomevalonate decarboxylase MVD then produces isopentenyl diphosphate. The isopentenyl-diphosphate delta-isomerase IDI1 then catalyzes the 1,3-allylic rearrangement of the homoallylic substrate isopentenyl (IPP) to its highly electrophilic allylic isomer, dimethylallyl diphosphate (DMAPP). Finally the farnesyl diphosphate synthase ERG20 catalyzes the sequential condensation of isopentenyl pyrophosphate with dimethylallyl pyrophosphate, and then with the resultant geranylpyrophosphate to the ultimate product farnesyl pyrophosphate. In Candida albicans (strain SC5314 / ATCC MYA-2876) (Yeast), this protein is Isopentenyl-diphosphate delta-isomerase.